The chain runs to 430 residues: Ribosomal protein uS12 methylthiotransferase RimO (430 aa).

The MTTase N-terminal domain occupies 2–119; sequence ISVYSISLGC…WPEMIGRALG (118 aa). Positions 11, 46, 81, 145, 149, and 152 each coordinate [4Fe-4S] cluster. One can recognise a Radical SAM core domain in the interval 131 to 361; it reads STGPSYAYLK…MEVQAEISEE (231 aa). In terms of domain architecture, TRAM spans 364–430; sequence EGFTGSDEDV…SRTYDLVALS (67 aa).

Belongs to the methylthiotransferase family. RimO subfamily. The cofactor is [4Fe-4S] cluster.

The protein resides in the cytoplasm. It catalyses the reaction L-aspartate(89)-[ribosomal protein uS12]-hydrogen + (sulfur carrier)-SH + AH2 + 2 S-adenosyl-L-methionine = 3-methylsulfanyl-L-aspartate(89)-[ribosomal protein uS12]-hydrogen + (sulfur carrier)-H + 5'-deoxyadenosine + L-methionine + A + S-adenosyl-L-homocysteine + 2 H(+). Its function is as follows. Catalyzes the methylthiolation of an aspartic acid residue of ribosomal protein uS12. This Oleidesulfovibrio alaskensis (strain ATCC BAA-1058 / DSM 17464 / G20) (Desulfovibrio alaskensis) protein is Ribosomal protein uS12 methylthiotransferase RimO.